A 118-amino-acid polypeptide reads, in one-letter code: Large ribosomal subunit protein bL20 (118 aa).

It belongs to the bacterial ribosomal protein bL20 family.

In terms of biological role, binds directly to 23S ribosomal RNA and is necessary for the in vitro assembly process of the 50S ribosomal subunit. It is not involved in the protein synthesizing functions of that subunit. In Thermotoga maritima (strain ATCC 43589 / DSM 3109 / JCM 10099 / NBRC 100826 / MSB8), this protein is Large ribosomal subunit protein bL20 (rplT).